Consider the following 752-residue polypeptide: Catalase-peroxidase 1 (752 aa).

The interval 1-45 (MPPNTPDASDARPPQADTETHSHSESENPVIESPKPKAHAPLTNQ) is disordered. A cross-link (tryptophyl-tyrosyl-methioninium (Trp-Tyr) (with M-270)) is located at residues 116 to 244 (WHAAGTYRIF…YGATTMGLIY (129 aa)). The active-site Proton acceptor is His117. A cross-link (tryptophyl-tyrosyl-methioninium (Tyr-Met) (with W-116)) is located at residues 244 to 270 (YVNPEGPEGKPDPLAAAHDIRETFGRM). His285 serves as a coordination point for heme b.

Belongs to the peroxidase family. Peroxidase/catalase subfamily. Homodimer or homotetramer. It depends on heme b as a cofactor. In terms of processing, formation of the three residue Trp-Tyr-Met cross-link is important for the catalase, but not the peroxidase activity of the enzyme.

It catalyses the reaction H2O2 + AH2 = A + 2 H2O. The catalysed reaction is 2 H2O2 = O2 + 2 H2O. Bifunctional enzyme with both catalase and broad-spectrum peroxidase activity. May play a role in the intracellular survival of mycobacteria. This is Catalase-peroxidase 1 from Mycolicibacterium fortuitum (Mycobacterium fortuitum).